The primary structure comprises 227 residues: Cytochrome c oxidase subunit 2 (227 aa).

Topologically, residues 1–14 are mitochondrial intermembrane; the sequence is MAYPFQLGLQDATS. A helical membrane pass occupies residues 15–45; the sequence is PIMEELLHFHDHTLMIVFLISSLVLYIISSM. The Mitochondrial matrix portion of the chain corresponds to 46–59; sequence LTTKLTHTSTMDAQ. A helical transmembrane segment spans residues 60–87; it reads EVETVWTILPAIILVLIALPSLRILYMM. Residues 88-227 lie on the Mitochondrial intermembrane side of the membrane; the sequence is DEINNPSLTV…YFETWSALML (140 aa). Residues H161, C196, E198, C200, H204, and M207 each contribute to the Cu cation site. A Mg(2+)-binding site is contributed by E198. Y218 carries the phosphotyrosine modification.

The protein belongs to the cytochrome c oxidase subunit 2 family. In terms of assembly, component of the cytochrome c oxidase (complex IV, CIV), a multisubunit enzyme composed of 14 subunits. The complex is composed of a catalytic core of 3 subunits MT-CO1, MT-CO2 and MT-CO3, encoded in the mitochondrial DNA, and 11 supernumerary subunits COX4I, COX5A, COX5B, COX6A, COX6B, COX6C, COX7A, COX7B, COX7C, COX8 and NDUFA4, which are encoded in the nuclear genome. The complex exists as a monomer or a dimer and forms supercomplexes (SCs) in the inner mitochondrial membrane with NADH-ubiquinone oxidoreductase (complex I, CI) and ubiquinol-cytochrome c oxidoreductase (cytochrome b-c1 complex, complex III, CIII), resulting in different assemblies (supercomplex SCI(1)III(2)IV(1) and megacomplex MCI(2)III(2)IV(2)). Found in a complex with TMEM177, COA6, COX18, COX20, SCO1 and SCO2. Interacts with TMEM177 in a COX20-dependent manner. Interacts with COX20. Interacts with COX16. Cu cation serves as cofactor.

The protein resides in the mitochondrion inner membrane. The catalysed reaction is 4 Fe(II)-[cytochrome c] + O2 + 8 H(+)(in) = 4 Fe(III)-[cytochrome c] + 2 H2O + 4 H(+)(out). Component of the cytochrome c oxidase, the last enzyme in the mitochondrial electron transport chain which drives oxidative phosphorylation. The respiratory chain contains 3 multisubunit complexes succinate dehydrogenase (complex II, CII), ubiquinol-cytochrome c oxidoreductase (cytochrome b-c1 complex, complex III, CIII) and cytochrome c oxidase (complex IV, CIV), that cooperate to transfer electrons derived from NADH and succinate to molecular oxygen, creating an electrochemical gradient over the inner membrane that drives transmembrane transport and the ATP synthase. Cytochrome c oxidase is the component of the respiratory chain that catalyzes the reduction of oxygen to water. Electrons originating from reduced cytochrome c in the intermembrane space (IMS) are transferred via the dinuclear copper A center (CU(A)) of subunit 2 and heme A of subunit 1 to the active site in subunit 1, a binuclear center (BNC) formed by heme A3 and copper B (CU(B)). The BNC reduces molecular oxygen to 2 water molecules using 4 electrons from cytochrome c in the IMS and 4 protons from the mitochondrial matrix. This is Cytochrome c oxidase subunit 2 (MT-CO2) from Speothos venaticus (Bush dog).